The following is a 552-amino-acid chain: FERRY endosomal RAB5 effector complex subunit 3 (552 aa).

Ser79 carries the phosphoserine modification.

In terms of assembly, component of the FERRY complex composed of five subunits, TBCK, PPP1R21, FERRY3, CRYZL1 and GATD1 with a ratio of 1:2:1:2:4, respectively.

It is found in the cytoplasm. Its subcellular location is the early endosome. Functionally, component of the FERRY complex (Five-subunit Endosomal Rab5 and RNA/ribosome intermediary). The FERRY complex directly interacts with mRNAs and RAB5A, and functions as a RAB5A effector involved in the localization and the distribution of specific mRNAs most likely by mediating their endosomal transport. The complex recruits mRNAs and ribosomes to early endosomes through direct mRNA-interaction. Plays a role in mast cell degranulation. The protein is FERRY endosomal RAB5 effector complex subunit 3 of Mus musculus (Mouse).